An 802-amino-acid polypeptide reads, in one-letter code: Neuronal PAS domain-containing protein 4 (802 aa).

Residues methionine 1–arginine 13 are basic motif; degenerate. Residues methionine 1–glycine 53 form the bHLH domain. Residues threonine 5–serine 38 are a coiled coil. Residues aspartate 14 to glycine 53 are helix-loop-helix motif. PAS domains are found at residues serine 70–aspartate 144 and proline 203–serine 273. Positions alanine 278–methionine 317 constitute a PAC domain. Polar residues-rich tracts occupy residues phenylalanine 466–threonine 476, serine 506–threonine 518, and threonine 532–proline 555. 2 disordered regions span residues phenylalanine 466–leucine 485 and serine 506–proline 555. The stretch at tyrosine 624–arginine 648 forms a coiled coil. The tract at residues leucine 717–glutamate 749 is disordered.

Efficient DNA binding requires dimerization with another bHLH protein. Heterodimer; forms a heterodimer with ARNT, ARNT2 or BMAL1. In terms of processing, ubiquitinated, leading to degradation by the proteosome. As to expression, brain.

Its subcellular location is the nucleus. Its function is as follows. Transcription factor expressed in neurons of the brain that regulates the excitatory-inhibitory balance within neural circuits and is required for contextual memory in the hippocampus. Plays a key role in the structural and functional plasticity of neurons. Acts as an early-response transcription factor in both excitatory and inhibitory neurons, where it induces distinct but overlapping sets of late-response genes in these two types of neurons, allowing the synapses that form on inhibitory and excitatory neurons to be modified by neuronal activity in a manner specific to their function within a circuit, thereby facilitating appropriate circuit responses to sensory experience. In excitatory neurons, activates transcription of BDNF, which in turn controls the number of GABA-releasing synapses that form on excitatory neurons, thereby promoting an increased number of inhibitory synapses on excitatory neurons. In inhibitory neurons, regulates a distinct set of target genes that serve to increase excitatory input onto somatostatin neurons, probably resulting in enhanced feedback inhibition within cortical circuits. The excitatory and inhibitory balance in neurons affects a number of processes, such as short-term and long-term memory, acquisition of experience, fear memory, response to stress and social behavior. Acts as a regulator of dendritic spine development in olfactory bulb granule cells in a sensory-experience-dependent manner by regulating expression of MDM2. Efficient DNA binding requires dimerization with another bHLH protein, such as ARNT, ARNT2 or BMAL1. Can activate the CME (CNS midline enhancer) element. The sequence is that of Neuronal PAS domain-containing protein 4 from Homo sapiens (Human).